The following is a 131-amino-acid chain: ATP synthase epsilon chain, chloroplastic (131 aa).

It belongs to the ATPase epsilon chain family. As to quaternary structure, F-type ATPases have 2 components, CF(1) - the catalytic core - and CF(0) - the membrane proton channel. CF(1) has five subunits: alpha(3), beta(3), gamma(1), delta(1), epsilon(1). CF(0) has three main subunits: a, b and c.

Its subcellular location is the plastid. The protein resides in the chloroplast thylakoid membrane. In terms of biological role, produces ATP from ADP in the presence of a proton gradient across the membrane. This chain is ATP synthase epsilon chain, chloroplastic, found in Oltmannsiellopsis viridis (Marine flagellate).